Here is a 471-residue protein sequence, read N- to C-terminus: E3 ubiquitin-protein ligase TRIM38 (471 aa).

The RING-type zinc-finger motif lies at 16–62 (CSICKAMMSHPVSINCGHSYCKSCIQSYYCNVSPKTGWKMLGCPLCS). The segment at 90 to 131 (DQDMVCEEHEEKFNRFCEDDGQLLCWRCYWEDRHKGHTLAHV) adopts a B box-type zinc-finger fold. 4 residues coordinate Zn(2+): cysteine 95, histidine 98, cysteine 117, and histidine 123. Positions 276–471 (CNVSELYFDV…PLFLPAINNQ (196 aa)) constitute a B30.2/SPRY domain.

In terms of assembly, interacts (via B30.2/SPRY domain) with TAB2 and TAB3.

It localises to the cytoplasm. It carries out the reaction S-ubiquitinyl-[E2 ubiquitin-conjugating enzyme]-L-cysteine + [acceptor protein]-L-lysine = [E2 ubiquitin-conjugating enzyme]-L-cysteine + N(6)-ubiquitinyl-[acceptor protein]-L-lysine.. It functions in the pathway protein modification; protein ubiquitination. It participates in protein modification; protein sumoylation. Its function is as follows. E3 ubiquitin-protein and E3 SUMO-protein ligase that acts as a regulator of innate immunity. Acts as a negative regulator of type I interferon IFN-beta production by catalyzing 'Lys-48'-linked polyubiquitination of AZI2/NAP1, leading to its degradation. Mediates 'Lys-48'-linked polyubiquitination and proteasomal degradation of the critical TLR adapter TICAM1, inhibiting TLR3-mediated type I interferon signaling. Acts as a positive regulator of the cGAS-STING pathway by acting as a E3 SUMO-protein ligase: mediates sumoylation of CGAS and STING, preventing their degradation and thereby activating the innate immune response to DNA virus. Also acts as a negative regulator of NF-kappa-B signaling independently of its E3 protein ligase activity by promoting lysosome-dependent degradation of TAB2 and TAB3 adapters. This chain is E3 ubiquitin-protein ligase TRIM38, found in Mus musculus (Mouse).